We begin with the raw amino-acid sequence, 666 residues long: MSQNLDQQVTLTVTLPDGTTKPLPAGSTGMDIALEIGRRLAREAVAIKIDGKAVDLSAPLTADCTAEIITFDSPEGKEIFWHSASHIMAHAIEELFPGSKFGAGPAIEQGFYYDIASEHRFTEEDLRAIEERMLLIAGRDIPIVREEMPRIQAIEYFRTVREDPYKVEILTDTLKETETVSLYHEGGFTDLCSGPHLFSTAALKAVKLFNISASYWRGDQSRESMQRIYGIAFPTEKLLKAHLSALEEAKKRDHRKLGTELELFMLSPEIGSGLPVWLPKGAIIRQELESFLKEEQRRRGYLPVYTPHIGNIDLYKRSGHYPYYSDSQFPPLTYHDEEGKAEQYLLKPMNCPHHHLIYSSKMRSYRDLPVRLAEFGTVYRHEQSGELNGLVRARGFTQDDSHIYCRPDQLVDEICNAIDLTRYVFATLGFTEVETRLSMHDPLNPSKYGGTADVWEQAEKDVREAADRMKINYFIGVGEASFYGPKIDFIVRDALGRKWQLGTVQVDYVMPERFDLSYVGSDGQKHRPIVIHRAPFGSMERFIGVLIEHTAGNFPLWLAPVQAVVLPIAEDVHDYGSEVRDAMHRAGIRVELDVRNEKIGRKIREAELAKIPFMVIVGQKEKEGGSVSLRRHRIGDEGAFSIQEMTEKLLNEIAAKGLTTKPTTNA.

The TGS domain occupies 7–70 (QQVTLTVTLP…TADCTAEIIT (64 aa)). Residues 253 to 555 (DHRKLGTELE…LIEHTAGNFP (303 aa)) are catalytic. The Zn(2+) site is built by Cys-351, His-402, and His-532.

It belongs to the class-II aminoacyl-tRNA synthetase family. As to quaternary structure, homodimer. Requires Zn(2+) as cofactor.

The protein localises to the cytoplasm. The enzyme catalyses tRNA(Thr) + L-threonine + ATP = L-threonyl-tRNA(Thr) + AMP + diphosphate + H(+). Functionally, catalyzes the attachment of threonine to tRNA(Thr) in a two-step reaction: L-threonine is first activated by ATP to form Thr-AMP and then transferred to the acceptor end of tRNA(Thr). Also edits incorrectly charged L-seryl-tRNA(Thr). The protein is Threonine--tRNA ligase of Chlorobium phaeovibrioides (strain DSM 265 / 1930) (Prosthecochloris vibrioformis (strain DSM 265)).